Reading from the N-terminus, the 249-residue chain is Sugar fermentation stimulation protein homolog (249 aa).

The protein belongs to the SfsA family.

The polypeptide is Sugar fermentation stimulation protein homolog (Rhizobium rhizogenes (strain K84 / ATCC BAA-868) (Agrobacterium radiobacter)).